The following is a 108-amino-acid chain: MADKYNVFDQLGELENTLNTTLTQISGIRQVLESSMTENATLRMELEKLRDRLAEFEKKEVKKETPKDQPNPNLIQIFNEGFHVCHLHYAERLAEGESCLDCLELLYR.

Positions 83, 85, 99, and 102 each coordinate Zn(2+).

The protein belongs to the YabA family. Homotetramer. Interacts with both DnaA and DnaN, acting as a bridge between these two proteins. Zn(2+) is required as a cofactor.

It localises to the cytoplasm. Its subcellular location is the nucleoid. Its function is as follows. Involved in control of chromosome replication initiation. Inhibits the cooperative binding of DnaA to the oriC region, thus negatively regulating initiation of chromosome replication. Inhibits the ability of DnaA-ATP to form a helix on DNA; does not disassemble preformed DnaA-DNA helices. Decreases the residence time of DnaA on the chromosome at its binding sites (oriC, replication forks and promoter-binding sites). Tethers DnaA to the replication machinery via the DNA polymerase beta sliding clamp subunit (dnaN). Associates with oriC and other DnaA targets on the chromosome in a DnaA-dependent manner. In Lactococcus lactis subsp. lactis (strain IL1403) (Streptococcus lactis), this protein is Replication initiation control protein YabA.